A 531-amino-acid chain; its full sequence is Achacin (531 aa).

The N-terminal stretch at 1–22 (MLLLNSALFILCLVCWLPGTSS) is a signal peptide. Residues 23–29 (SRVLTRR) constitute a propeptide that is removed on maturation. N112, N150, N308, and N392 each carry an N-linked (GlcNAc...) asparagine glycan.

To A.kurodai aplysianin-A. In terms of assembly, homodimer. Collar tissue.

Functionally, antibacterial glycoprotein. The sequence is that of Achacin from Lissachatina fulica (Giant African land snail).